The primary structure comprises 338 residues: MKRLFSNVINLTLVLIVGVALSGCTVSNASIGSSSPWSLVDLDTEANPLDVDFVDDKNGFLVGTNRLILETNDGGITWKERNLDIPSEGNFRLISVDFKGQEGWIAGQPGLILHTTDGGKNWTRLDLGNKLPGDPYLITTIDTDIAELATTAGAIYKTTDAGTNWEAIVVDTSGSGGIRELRRTNNGGYISVSSLGNFFSVLRPGEEIWSPHQRASSKRVQSVGEQPNGDLWMLSRGAEIRFNADPDDIDSWSKPIIPIVNGYNYQDLVWDPSKSIWAAGGNGTLLVSNDEGKTWEKDPVGESVPTNFIRILFLDDLNSESPKGFVFGERGNLLRWQG.

The signal sequence occupies residues 1 to 23; the sequence is MKRLFSNVINLTLVLIVGVALSG. Cysteine 24 carries the N-palmitoyl cysteine lipid modification. A lipid anchor (S-diacylglycerol cysteine) is attached at cysteine 24.

It belongs to the Ycf48 family. As to quaternary structure, part of early PSII assembly complexes which includes D1 (psbA) and PsbI; not found in mature PSII. Binds to the lumenal side of PSII complexes. Interacts with YidC.

It localises to the cellular thylakoid membrane. In terms of biological role, a factor required for optimal assembly of photosystem II (PSII), acting in the early stages of PSII assembly. Also plays a role in replacement of photodamaged D1 (psbA). Assists YidC in synthesis of chlorophyll-binding proteins. The protein is Photosystem II assembly lipoprotein Ycf48 of Prochlorococcus marinus (strain NATL2A).